The sequence spans 67 residues: ATP synthase F(0) complex subunit 8 (67 aa).

Residues 8 to 24 (TWLIMISSMILTLFITF) form a helical membrane-spanning segment. K54 is subject to N6-acetyllysine; alternate. Position 54 is an N6-succinyllysine; alternate (K54). N6-acetyllysine is present on K57.

Belongs to the ATPase protein 8 family. In terms of assembly, component of the ATP synthase complex composed at least of ATP5F1A/subunit alpha, ATP5F1B/subunit beta, ATP5MC1/subunit c (homooctomer), MT-ATP6/subunit a, MT-ATP8/subunit 8, ATP5ME/subunit e, ATP5MF/subunit f, ATP5MG/subunit g, ATP5MK/subunit k, ATP5MJ/subunit j, ATP5F1C/subunit gamma, ATP5F1D/subunit delta, ATP5F1E/subunit epsilon, ATP5PF/subunit F6, ATP5PB/subunit b, ATP5PD/subunit d, ATP5PO/subunit OSCP. ATP synthase complex consists of a soluble F(1) head domain (subunits alpha(3) and beta(3)) - the catalytic core - and a membrane F(0) domain - the membrane proton channel (subunits c, a, 8, e, f, g, k and j). These two domains are linked by a central stalk (subunits gamma, delta, and epsilon) rotating inside the F1 region and a stationary peripheral stalk (subunits F6, b, d, and OSCP). Interacts with PRICKLE3.

The protein localises to the mitochondrion membrane. In terms of biological role, subunit 8, of the mitochondrial membrane ATP synthase complex (F(1)F(0) ATP synthase or Complex V) that produces ATP from ADP in the presence of a proton gradient across the membrane which is generated by electron transport complexes of the respiratory chain. ATP synthase complex consist of a soluble F(1) head domain - the catalytic core - and a membrane F(1) domain - the membrane proton channel. These two domains are linked by a central stalk rotating inside the F(1) region and a stationary peripheral stalk. During catalysis, ATP synthesis in the catalytic domain of F(1) is coupled via a rotary mechanism of the central stalk subunits to proton translocation. In vivo, can only synthesize ATP although its ATP hydrolase activity can be activated artificially in vitro. Part of the complex F(0) domain. The protein is ATP synthase F(0) complex subunit 8 of Halichoerus grypus (Gray seal).